Here is a 208-residue protein sequence, read N- to C-terminus: MMGYQTNSNFSMFFSSENDDQNHHNYDPYNNFSSSTSVDCTLSLGTPSTRLDDHHRFSSANSNNISGDFYIHGGNAKTSSYKKGGVAHSLPRRCASCDTTSTPLWRNGPKGPKSLCNACGIRFKKEERRATARNLTISGGGSSAAEVPVENSYNGGGNYYSHHHHHYASSSPSWAHQNTQRVPYFSPVPEMEYPYVDNVTASSFMSWN.

A GATA-type zinc finger spans residues 94–119; it reads CASCDTTSTPLWRNGPKGPKSLCNAC.

The protein belongs to the type IV zinc-finger family. Class B subfamily.

Its subcellular location is the nucleus. Functionally, transcriptional regulator that specifically binds 5'-GATA-3' or 5'-GAT-3' motifs within gene promoters. This chain is GATA transcription factor 20, found in Arabidopsis thaliana (Mouse-ear cress).